The sequence spans 398 residues: Formate-dependent phosphoribosylglycinamide formyltransferase (398 aa).

Residues 21-22 (EL) and E81 contribute to the N(1)-(5-phospho-beta-D-ribosyl)glycinamide site. ATP-binding positions include R113, K154, 194–197 (EEYV), and E202. The region spanning 118–314 (RFAAEKVKVP…EFQVHVRSAL (197 aa)) is the ATP-grasp domain. Positions 273 and 285 each coordinate Mg(2+). N(1)-(5-phospho-beta-D-ribosyl)glycinamide is bound by residues D292, K362, and 369–370 (RR).

The protein belongs to the PurK/PurT family. Homodimer.

It catalyses the reaction N(1)-(5-phospho-beta-D-ribosyl)glycinamide + formate + ATP = N(2)-formyl-N(1)-(5-phospho-beta-D-ribosyl)glycinamide + ADP + phosphate + H(+). It functions in the pathway purine metabolism; IMP biosynthesis via de novo pathway; N(2)-formyl-N(1)-(5-phospho-D-ribosyl)glycinamide from N(1)-(5-phospho-D-ribosyl)glycinamide (formate route): step 1/1. Its function is as follows. Involved in the de novo purine biosynthesis. Catalyzes the transfer of formate to 5-phospho-ribosyl-glycinamide (GAR), producing 5-phospho-ribosyl-N-formylglycinamide (FGAR). Formate is provided by PurU via hydrolysis of 10-formyl-tetrahydrofolate. This chain is Formate-dependent phosphoribosylglycinamide formyltransferase, found in Sulfolobus acidocaldarius (strain ATCC 33909 / DSM 639 / JCM 8929 / NBRC 15157 / NCIMB 11770).